The sequence spans 62 residues: Large ribosomal subunit protein eL24 (62 aa).

4 residues coordinate Zn(2+): C6, C9, C32, and C36. The segment at 6 to 36 adopts a C4-type zinc-finger fold; sequence CYFCGKMLEPGTGKLYVKKDGSTYFMCSSKC.

The protein belongs to the eukaryotic ribosomal protein eL24 family. In terms of assembly, part of the 50S ribosomal subunit. Forms a cluster with proteins L3 and L14. The cofactor is Zn(2+).

Functionally, binds to the 23S rRNA. In Methanosarcina acetivorans (strain ATCC 35395 / DSM 2834 / JCM 12185 / C2A), this protein is Large ribosomal subunit protein eL24.